A 179-amino-acid polypeptide reads, in one-letter code: Orotate phosphoribosyltransferase (179 aa).

Residues Arg94, Lys95, Lys98, His100, and 120 to 128 (EDTSTTGAS) each bind 5-phospho-alpha-D-ribose 1-diphosphate. Thr124 and Arg152 together coordinate orotate.

Belongs to the purine/pyrimidine phosphoribosyltransferase family. PyrE subfamily. As to quaternary structure, homodimer. Requires Mg(2+) as cofactor.

The enzyme catalyses orotidine 5'-phosphate + diphosphate = orotate + 5-phospho-alpha-D-ribose 1-diphosphate. It functions in the pathway pyrimidine metabolism; UMP biosynthesis via de novo pathway; UMP from orotate: step 1/2. Functionally, catalyzes the transfer of a ribosyl phosphate group from 5-phosphoribose 1-diphosphate to orotate, leading to the formation of orotidine monophosphate (OMP). This chain is Orotate phosphoribosyltransferase, found in Mycobacterium leprae (strain TN).